Reading from the N-terminus, the 260-residue chain is MVKKNTFFANKNLGQNFLVDSEVINRIINVINPKSHDFMIEIGPGLGALTYPICKILHKLFVIEHDNNLGTRLLKDISNIEVFVEDVLKFNFLNLINNSFKSVRIIGNLPYNISIPILFYLFKFHNNIIDMNFMFQKEVASKLLAIPGTKSYSRLSIIAQYYCDIDFLFDVVAQSFYPIPKVTSSFVRLVPRKVFNLYVRDINQLSNVTALAFQQRRKIVKNSLSSLFNDDALRKLGIDPLLRAENLSVKQYCLLSNHVC.

Residues Asn16, Leu18, Gly43, Glu64, Asp86, and Asn108 each contribute to the S-adenosyl-L-methionine site.

This sequence belongs to the class I-like SAM-binding methyltransferase superfamily. rRNA adenine N(6)-methyltransferase family. RsmA subfamily.

The protein localises to the cytoplasm. It catalyses the reaction adenosine(1518)/adenosine(1519) in 16S rRNA + 4 S-adenosyl-L-methionine = N(6)-dimethyladenosine(1518)/N(6)-dimethyladenosine(1519) in 16S rRNA + 4 S-adenosyl-L-homocysteine + 4 H(+). Specifically dimethylates two adjacent adenosines (A1518 and A1519) in the loop of a conserved hairpin near the 3'-end of 16S rRNA in the 30S particle. May play a critical role in biogenesis of 30S subunits. This chain is Ribosomal RNA small subunit methyltransferase A, found in Buchnera aphidicola subsp. Baizongia pistaciae (strain Bp).